Here is a 318-residue protein sequence, read N- to C-terminus: 26 kDa endochitinase 1 (318 aa).

Residues 1–19 (MRAFVLFAVVAMAATMAVA) form the signal peptide. Positions 20–59 (EQCGSQAGGATCPNCLCCSRFGWCGSTPYCGDGCQSQCSG) constitute a Chitin-binding type-1 domain. 7 cysteine pairs are disulfide-bonded: C22/C37, C31/C43, C36/C49, C53/C57, C98/C160, C172/C180, and C279/C311. E142 functions as the Proton donor in the catalytic mechanism.

Belongs to the glycosyl hydrolase 19 family. Chitinase class I subfamily.

The catalysed reaction is Random endo-hydrolysis of N-acetyl-beta-D-glucosaminide (1-&gt;4)-beta-linkages in chitin and chitodextrins.. Defense against chitin-containing fungal pathogens. The sequence is that of 26 kDa endochitinase 1 from Hordeum vulgare (Barley).